Reading from the N-terminus, the 526-residue chain is Phenylacetaldehyde oxime monooxygenase CYP71AN24 (526 aa).

Residues 22–42 (SFNIFLVPILCLSIFILFSLT) traverse the membrane as a helical segment. Cysteine 465 contacts heme.

Belongs to the cytochrome P450 family. Requires heme as cofactor. Expressed in seedlings and leaves.

The protein localises to the membrane. The enzyme catalyses (E)-phenylacetaldehyde oxime + reduced [NADPH--hemoprotein reductase] + O2 = (R)-mandelonitrile + oxidized [NADPH--hemoprotein reductase] + 2 H2O + H(+). It carries out the reaction phenylacetonitrile + reduced [NADPH--hemoprotein reductase] + O2 = (R)-mandelonitrile + oxidized [NADPH--hemoprotein reductase] + H2O + H(+). Its function is as follows. Involved in L-phenylalanine-derived cyanogenic glycoside biosynthesis, including prunasin and amygdalin defensive agents. Catalyzes the conversion of phenylacetaldoxime (PAOx) and phenylacetonitrile (PAN) into mandelonitrile (MAN). To a lower extent, can convert various aromatic aldoximes and nitriles; mediates the transformation of 4-hydroxyphenylacetaldoxime, 4-hydroxyphenylacetonitrile, indole-3-acetal-doxime and indole-3-acetonitrile into the corresponding hydroxynitriles, but cannot use the aliphatic compounds 2-methylpropanaloxime and 2-methylpropanenitrile as substrates. This is Phenylacetaldehyde oxime monooxygenase CYP71AN24 from Prunus mume (Japanese apricot).